Consider the following 538-residue polypeptide: Chaperonin GroEL (538 aa).

Residues 29-32, 86-90, glycine 413, 476-478, and aspartate 492 contribute to the ATP site; these read TIGP, DGTTT, and NAA.

This sequence belongs to the chaperonin (HSP60) family. As to quaternary structure, forms a cylinder of 14 subunits composed of two heptameric rings stacked back-to-back. Interacts with the co-chaperonin GroES.

It localises to the cytoplasm. The catalysed reaction is ATP + H2O + a folded polypeptide = ADP + phosphate + an unfolded polypeptide.. Functionally, together with its co-chaperonin GroES, plays an essential role in assisting protein folding. The GroEL-GroES system forms a nano-cage that allows encapsulation of the non-native substrate proteins and provides a physical environment optimized to promote and accelerate protein folding. This is Chaperonin GroEL from Staphylococcus aureus (strain USA300).